Reading from the N-terminus, the 140-residue chain is Hemoglobin subunit beta (140 aa).

One can recognise a Globin domain in the interval 1–140; it reads GGSDVSAFLA…VGEALAKGYH (140 aa). H57 and H86 together coordinate heme b.

Belongs to the globin family. As to quaternary structure, heterotetramer of either two alpha-B chains or two alpha-C chains and two beta chains.

Its function is as follows. The beta chain is a component of adult hemoglobins B. And C. The protein is Hemoglobin subunit beta (HBB) of Aquarana catesbeiana (American bullfrog).